Here is a 331-residue protein sequence, read N- to C-terminus: Anthranilate phosphoribosyltransferase (331 aa).

5-phospho-alpha-D-ribose 1-diphosphate-binding positions include glycine 79, 82-83 (GD), serine 87, 89-92 (NIST), 107-115 (KHCNGNISS), and serine 119. Residue glycine 79 participates in anthranilate binding. Serine 91 is a Mg(2+) binding site. Asparagine 110 provides a ligand contact to anthranilate. Arginine 165 provides a ligand contact to anthranilate. Mg(2+)-binding residues include aspartate 223 and glutamate 224.

This sequence belongs to the anthranilate phosphoribosyltransferase family. As to quaternary structure, homodimer. It depends on Mg(2+) as a cofactor.

The enzyme catalyses N-(5-phospho-beta-D-ribosyl)anthranilate + diphosphate = 5-phospho-alpha-D-ribose 1-diphosphate + anthranilate. The protein operates within amino-acid biosynthesis; L-tryptophan biosynthesis; L-tryptophan from chorismate: step 2/5. Functionally, catalyzes the transfer of the phosphoribosyl group of 5-phosphorylribose-1-pyrophosphate (PRPP) to anthranilate to yield N-(5'-phosphoribosyl)-anthranilate (PRA). This Buchnera aphidicola subsp. Baizongia pistaciae (strain Bp) protein is Anthranilate phosphoribosyltransferase.